Consider the following 238-residue polypeptide: Ribosomal RNA small subunit methyltransferase G (238 aa).

Residues G77, F82, 128–129 (AE), and R147 each bind S-adenosyl-L-methionine.

The protein belongs to the methyltransferase superfamily. RNA methyltransferase RsmG family.

Its subcellular location is the cytoplasm. Its function is as follows. Specifically methylates the N7 position of guanine in position 535 of 16S rRNA. The polypeptide is Ribosomal RNA small subunit methyltransferase G (Listeria monocytogenes serotype 4b (strain F2365)).